The chain runs to 643 residues: Threonine--tRNA ligase (643 aa).

Residues 1 to 65 (MIHITLPDGS…NKDMPLSIVT (65 aa)) enclose the TGS domain. The interval 246 to 537 (DHRKLGRELD…LIEQHAGAMP (292 aa)) is catalytic. Positions 337, 388, and 514 each coordinate Zn(2+).

It belongs to the class-II aminoacyl-tRNA synthetase family. Homodimer. It depends on Zn(2+) as a cofactor.

It localises to the cytoplasm. The enzyme catalyses tRNA(Thr) + L-threonine + ATP = L-threonyl-tRNA(Thr) + AMP + diphosphate + H(+). Functionally, catalyzes the attachment of threonine to tRNA(Thr) in a two-step reaction: L-threonine is first activated by ATP to form Thr-AMP and then transferred to the acceptor end of tRNA(Thr). Also edits incorrectly charged L-seryl-tRNA(Thr). The protein is Threonine--tRNA ligase of Delftia acidovorans (strain DSM 14801 / SPH-1).